Here is an 839-residue protein sequence, read N- to C-terminus: Lon protease (839 aa).

Positions 31 to 224 constitute a Lon N-terminal domain; the sequence is LFLIPIKSRP…KVLLFLKKEI (194 aa). 377-384 lines the ATP pocket; that stretch reads GPPGVGKT. The Lon proteolytic domain occupies 613–790; that stretch reads ASVPGTALGL…EEVALLLFDE (178 aa). Residues serine 696 and lysine 739 contribute to the active site. Residues 807–839 form a disordered region; the sequence is IVNPTRKLSPKKKTTQKQKLSLSKQKGNNQKKK. Positions 823–832 are enriched in low complexity; sequence KQKLSLSKQK.

The protein belongs to the peptidase S16 family. In terms of assembly, homohexamer. Organized in a ring with a central cavity.

Its subcellular location is the cytoplasm. The catalysed reaction is Hydrolysis of proteins in presence of ATP.. Functionally, ATP-dependent serine protease that mediates the selective degradation of mutant and abnormal proteins as well as certain short-lived regulatory proteins. Required for cellular homeostasis and for survival from DNA damage and developmental changes induced by stress. Degrades polypeptides processively to yield small peptide fragments that are 5 to 10 amino acids long. Binds to DNA in a double-stranded, site-specific manner. The chain is Lon protease from Leptospira interrogans serogroup Icterohaemorrhagiae serovar copenhageni (strain Fiocruz L1-130).